The sequence spans 311 residues: Aspartate carbamoyltransferase catalytic subunit (311 aa).

Residues arginine 55 and threonine 56 each coordinate carbamoyl phosphate. An L-aspartate-binding site is contributed by lysine 84. Positions 105, 133, and 136 each coordinate carbamoyl phosphate. Positions 166 and 229 each coordinate L-aspartate. Carbamoyl phosphate is bound by residues leucine 268 and proline 269.

This sequence belongs to the aspartate/ornithine carbamoyltransferase superfamily. ATCase family. Heterododecamer (2C3:3R2) of six catalytic PyrB chains organized as two trimers (C3), and six regulatory PyrI chains organized as three dimers (R2).

The enzyme catalyses carbamoyl phosphate + L-aspartate = N-carbamoyl-L-aspartate + phosphate + H(+). It participates in pyrimidine metabolism; UMP biosynthesis via de novo pathway; (S)-dihydroorotate from bicarbonate: step 2/3. In terms of biological role, catalyzes the condensation of carbamoyl phosphate and aspartate to form carbamoyl aspartate and inorganic phosphate, the committed step in the de novo pyrimidine nucleotide biosynthesis pathway. This is Aspartate carbamoyltransferase catalytic subunit from Alkaliphilus metalliredigens (strain QYMF).